Consider the following 171-residue polypeptide: Regulator of ribonuclease activity A (171 aa).

The protein belongs to the RraA family. In terms of assembly, homotrimer. Binds to both RNA-binding sites in the C-terminal region of Rne and to RhlB.

Its subcellular location is the cytoplasm. Its function is as follows. Globally modulates RNA abundance by binding to RNase E (Rne) and regulating its endonucleolytic activity. Can modulate Rne action in a substrate-dependent manner by altering the composition of the degradosome. Modulates RNA-binding and helicase activities of the degradosome. The protein is Regulator of ribonuclease activity A of Vibrio cholerae serotype O1 (strain ATCC 39315 / El Tor Inaba N16961).